We begin with the raw amino-acid sequence, 165 residues long: MANPNKRIMNKKSKQASISSILNFFFFYIMEYFVAVDNETSLGVFTSIEQCEETMKQYPGLHYVVFKYTCPADAENTDVVYLIPSLTLHTPMFVDHCPNRTKQARHVLKKINLVFEEESIENWKVSVNTVFPHVHNRLSAPKLSIDEANEAVEKFLIQAGRLMSL.

The helical transmembrane segment at 16–36 (ASISSILNFFFFYIMEYFVAV) threads the bilayer.

The protein belongs to the asfivirus F165R family.

It localises to the host membrane. This is an uncharacterized protein from Ornithodoros (relapsing fever ticks).